The sequence spans 1776 residues: TOG array regulator of axonemal microtubules protein 1 (1776 aa).

TOG stretches follow at residues 94-311 (EEET…RRLE) and 351-595 (PQEL…MPSS). HEAT repeat units lie at residues 175–212 (AFSL…RSSG), 214–246 (VLRT…PEDL), 250–288 (LDLT…RLGQ), 344–383 (NLKF…KFNP), 389–426 (ASLV…RLGE), 430–465 (QFLG…MKEV), 466–503 (GPQR…YPSE), and 505–542 (FDLP…SMGS). Disordered stretches follow at residues 655–676 (KNKL…TSNS), 817–921 (ILPS…RGIN), 970–1000 (HSSL…DSPD), and 1062–1084 (TRLS…GFTR). Polar residues-rich tracts occupy residues 826-836 (PRTSPKHTSPL), 845-855 (DNSISFSNSWP), and 871-892 (LANQ…TAVQ). Residues 988–1000 (SGSSSTSDVDSPD) are compositionally biased toward low complexity. The segment at 1259 to 1481 (DIALTEALRL…YIKESVKNLR (223 aa)) is TOG 3. HEAT repeat units lie at residues 1297–1334 (TKLH…YLKK) and 1338–1375 (QELD…NVTP). The segment at 1493–1536 (ASAKGRRSHPGSVGNTRSSSVSRDAFSSSEREVTEVREVPRKSA) is disordered. The segment covering 1509 to 1520 (RSSSVSRDAFSS) has biased composition (low complexity). The segment covering 1521 to 1533 (SEREVTEVREVPR) has biased composition (basic and acidic residues). Positions 1540–1776 (SLESAEYIKV…LLDVTVLSEL (237 aa)) are TOG 4. HEAT repeat units follow at residues 1541 to 1578 (LESA…NNQE), 1582 to 1619 (GNIV…LLRD), and 1623 to 1661 (PIIN…HVDN).

This sequence belongs to the Crescerin family. In terms of assembly, interacts with ARMC9. Interacts with CCDC66, CEP104 and CSPP1.

It is found in the cell projection. The protein resides in the cilium. The protein localises to the cytoplasm. It localises to the cytoskeleton. Its subcellular location is the cilium axoneme. Functionally, involved in ciliogenesis. It is required for appropriate acetylation and polyglutamylation of ciliary microtubules, and regulation of cilium length. Interacts with microtubules and promotes microtubule polymerization via its HEAT repeat domains, especially those in TOG region 2 and 4. This is TOG array regulator of axonemal microtubules protein 1 (Togaram1) from Mus musculus (Mouse).